A 300-amino-acid chain; its full sequence is Probable protein phosphatase 2C 2 (300 aa).

One can recognise a PPM-type phosphatase domain in the interval 23 to 298; sequence IFAASEMQGW…DNMTTILVYL (276 aa). 4 residues coordinate Mn(2+): aspartate 57, glycine 58, aspartate 237, and aspartate 289.

This sequence belongs to the PP2C family. Requires Mg(2+) as cofactor. The cofactor is Mn(2+).

It is found in the membrane. It catalyses the reaction O-phospho-L-seryl-[protein] + H2O = L-seryl-[protein] + phosphate. The catalysed reaction is O-phospho-L-threonyl-[protein] + H2O = L-threonyl-[protein] + phosphate. Enzyme with a broad specificity. The sequence is that of Probable protein phosphatase 2C 2 from Paramecium tetraurelia.